A 236-amino-acid chain; its full sequence is ATP synthase subunit a, chloroplastic (236 aa).

The next 5 helical transmembrane spans lie at 25–45 (MHGQVLINSWIVLGLIIAFAV), 87–107 (FIGTLFLFIFVSNWSGALIPW), 123–143 (DINTTVALALLTSLTYFYAGL), 180–202 (LFGNILADELVVAVLVSLVPLVI), and 210–230 (GLFTSGIQALIFATLAGAYIG).

It belongs to the ATPase A chain family. As to quaternary structure, F-type ATPases have 2 components, CF(1) - the catalytic core - and CF(0) - the membrane proton channel. CF(1) has five subunits: alpha(3), beta(3), gamma(1), delta(1), epsilon(1). CF(0) has four main subunits: a, b, b' and c.

It is found in the plastid. Its subcellular location is the chloroplast thylakoid membrane. Key component of the proton channel; it plays a direct role in the translocation of protons across the membrane. This is ATP synthase subunit a, chloroplastic from Ostreococcus tauri.